The primary structure comprises 164 residues: B-phycoerythrin alpha chain (164 aa).

The (2R,3E)-phycoerythrobilin site is built by Cys82 and Cys139.

Belongs to the phycobiliprotein family. Heteromer of 6 alpha, 6 beta and one gamma chain. In terms of processing, contains two covalently linked bilin chromophores.

Its subcellular location is the plastid. It localises to the chloroplast thylakoid membrane. Its function is as follows. Light-harvesting photosynthetic bile pigment-protein from the phycobiliprotein complex. In Rhodella violacea (Red alga), this protein is B-phycoerythrin alpha chain (cpeA).